The chain runs to 329 residues: Peroxidase 51 (329 aa).

The signal sequence occupies residues 1–25 (MVVMNKTNLLLLILSLFLAINLSSA). 4 cysteine pairs are disulfide-bonded: cysteine 36–cysteine 119, cysteine 69–cysteine 74, cysteine 125–cysteine 325, and cysteine 204–cysteine 236. Histidine 67 (proton acceptor) is an active-site residue. Residues aspartate 68, valine 71, glycine 73, aspartate 75, and serine 77 each coordinate Ca(2+). Proline 167 serves as a coordination point for substrate. Histidine 197 provides a ligand contact to heme b. Threonine 198 is a binding site for Ca(2+). Asparagine 215 carries N-linked (GlcNAc...) asparagine glycosylation. Ca(2+) is bound by residues aspartate 249, threonine 252, and aspartate 257.

Belongs to the peroxidase family. Classical plant (class III) peroxidase subfamily. Requires heme b as cofactor. It depends on Ca(2+) as a cofactor.

It localises to the secreted. The catalysed reaction is 2 a phenolic donor + H2O2 = 2 a phenolic radical donor + 2 H2O. Its function is as follows. Removal of H(2)O(2), oxidation of toxic reductants, biosynthesis and degradation of lignin, suberization, auxin catabolism, response to environmental stresses such as wounding, pathogen attack and oxidative stress. These functions might be dependent on each isozyme/isoform in each plant tissue. The protein is Peroxidase 51 (PER51) of Arabidopsis thaliana (Mouse-ear cress).